A 238-amino-acid chain; its full sequence is Protein G1-like8 (238 aa).

Disordered stretches follow at residues 1-33 (MEGG…RYES) and 147-238 (KARG…ATRV). Positions 10–27 (GQAQPVAQAPPAMQPMQQ) are enriched in low complexity. The ALOG domain maps to 30–157 (RYESQKRRDW…ARGIPYEKKK (128 aa)). The Nuclear localization signal signature appears at 155–159 (KKKRK). Residues 165 to 176 (QPPPPPPPPPQH) are compositionally biased toward pro residues. 2 stretches are compositionally biased toward low complexity: residues 177–213 (QPGA…ATSQ) and 222–238 (TTTT…ATRV).

This sequence belongs to the plant homeotic and developmental regulators ALOG protein family.

The protein localises to the nucleus. Probable transcription regulator that acts as a developmental regulator by promoting cell growth in response to light. The sequence is that of Protein G1-like8 (G1L8) from Oryza sativa subsp. japonica (Rice).